We begin with the raw amino-acid sequence, 165 residues long: Fibrinogen-binding protein (165 aa).

Positions 1–29 are cleaved as a signal peptide; it reads MKNKLIAKSLLTIAAIGITTTTIASTADA.

As to quaternary structure, interacts with host fibrinogen alpha chain/FGA. Interacts with host complement protein C3.

It localises to the secreted. Extracellular fibrinogen-binding protein that plays an important role in virulence. By interacting with the alpha chain of fibrinogen and its derivative fibrin, enhances a non-functional interaction between fibrinogen and platelets and is responsible for repression of fibrinogen-dependent platelet aggregation. In addition, assembles a fibrinogen protective shield around the bacteria which results in impaired phagocytic clearance by the host. Mechanistically, interacts with host complement C3b deposited on the surface of the bacterium via its C-terminal and then recruits fibrinogen via its N-terminal. The polypeptide is Fibrinogen-binding protein (fib) (Staphylococcus aureus).